The primary structure comprises 355 residues: Probable aldo-keto reductase 3 (355 aa).

Y70 acts as the Proton donor in catalysis. H138 contacts substrate. 217 to 227 (SPLGRGFFSSG) lines the NADP(+) pocket.

It belongs to the aldo/keto reductase family.

In Oryza sativa subsp. indica (Rice), this protein is Probable aldo-keto reductase 3.